A 461-amino-acid polypeptide reads, in one-letter code: Vimentin (461 aa).

2 stretches are compositionally biased toward low complexity: residues 1-14 and 35-52; these read MNRTTSRQTTSSSS and SSRQYSSPVRSSRMSYSV. A disordered region spans residues 1–52; it reads MNRTTSRQTTSSSSYKRMFGGEGRPSVGMARSTLSSRQYSSPVRSSRMSYSV. The head stretch occupies residues 1-91; sequence MNRTTSRQTT…FALSDAINSE (91 aa). The coil 1A stretch occupies residues 92–127; that stretch reads FKANRTNEKAEMQHLNDRFASYIDKVRFLEQQNKIL. The stretch at 92–127 forms a coiled coil; the sequence is FKANRTNEKAEMQHLNDRFASYIDKVRFLEQQNKIL. The IF rod domain occupies 99 to 407; it reads EKAEMQHLND…KLLEGEESRI (309 aa). The linker 1 stretch occupies residues 128–149; the sequence is LAELEQLKGKGASRIGDLYEDE. The stretch at 150–241 forms a coiled coil; that stretch reads MRDLRRQVDQ…KLHDEEVAEL (92 aa). The coil 1B stretch occupies residues 150 to 241; it reads MRDLRRQVDQ…KLHDEEVAEL (92 aa). Residues 242–264 are linker 12; that stretch reads QAQIQDQHVQIDMDVAKPDLTAA. Residues 265–403 form a coil 2 region; that stretch reads LRDVRVQYET…ATYRKLLEGE (139 aa). Residues 299 to 403 are a coiled coil; sequence NRNTDAIRQA…ATYRKLLEGE (105 aa). Residues 404 to 461 are tail; that stretch reads ESRITTPMPNFSSFNLRESMLEARPMIDNLSKKVVIKTIETRDGHVINESTQNHDDLE.

This sequence belongs to the intermediate filament family. In terms of assembly, homomer assembled from elementary dimers. Post-translationally, one of the most prominent phosphoproteins in various cells of mesenchymal origin. Phosphorylation is enhanced during cell division, at which time vimentin filaments are significantly reorganized.

The protein resides in the cytoplasm. Its subcellular location is the cytoskeleton. The protein localises to the nucleus matrix. In terms of biological role, vimentins are class-III intermediate filaments found in various non-epithelial cells, especially mesenchymal cells. Vimentin is attached to the nucleus, endoplasmic reticulum, and mitochondria, either laterally or terminally. In Oncorhynchus mykiss (Rainbow trout), this protein is Vimentin (vim).